The following is a 417-amino-acid chain: Tyrosine--tRNA ligase (417 aa).

Tyr-39 provides a ligand contact to L-tyrosine. Residues 44–53 carry the 'HIGH' region motif; sequence PTAPSLHAGG. The L-tyrosine site is built by Tyr-176 and Gln-180. The 'KMSKS' region motif lies at 236-240; that stretch reads KMGKS. Lys-239 lines the ATP pocket. The region spanning 350–417 is the S4 RNA-binding domain; the sequence is IGVLALMVLA…KKRHVLIRPA (68 aa).

The protein belongs to the class-I aminoacyl-tRNA synthetase family. TyrS type 1 subfamily. Homodimer.

It is found in the cytoplasm. The enzyme catalyses tRNA(Tyr) + L-tyrosine + ATP = L-tyrosyl-tRNA(Tyr) + AMP + diphosphate + H(+). Catalyzes the attachment of tyrosine to tRNA(Tyr) in a two-step reaction: tyrosine is first activated by ATP to form Tyr-AMP and then transferred to the acceptor end of tRNA(Tyr). The sequence is that of Tyrosine--tRNA ligase from Brucella suis biovar 1 (strain 1330).